The chain runs to 354 residues: Protein RecA (354 aa).

68-75 serves as a coordination point for ATP; the sequence is GPESSGKT.

Belongs to the RecA family.

Its subcellular location is the cytoplasm. Can catalyze the hydrolysis of ATP in the presence of single-stranded DNA, the ATP-dependent uptake of single-stranded DNA by duplex DNA, and the ATP-dependent hybridization of homologous single-stranded DNAs. It interacts with LexA causing its activation and leading to its autocatalytic cleavage. The polypeptide is Protein RecA (Synechocystis sp. (strain ATCC 27184 / PCC 6803 / Kazusa)).